A 443-amino-acid chain; its full sequence is Threonine/serine transporter TdcC (443 aa).

Helical transmembrane passes span 22–42 (TTWTLGLFGTAIGAGVLFFPI), 44–64 (AGFGGLIPILLMLVLAYPIAF), 97–117 (GVVITFLYFFAICPLLWIYGV), 140–160 (FVALFLLLLMAFVIWFGKDLM), 163–183 (VMSYLVWPFIASLVLISLSLI), 207–227 (ILVTVWLGISIMVFSFNFSPI), 259–279 (ASMLMVAVVMFFAFSCLFTLS), 319–339 (ASIIALVAIFKSFFGHYLGTL), 366–386 (ISMIFIMGSTWVVAYANPNIL), 389–409 (IEAMGAPIIASLLCLLPMYAI), and 423–443 (DNVFVTLIGLLTILNIVYKLF).

This sequence belongs to the amino acid/polyamine transporter 2 family. SdaC/TdcC subfamily.

The protein resides in the cell inner membrane. The enzyme catalyses L-threonine(in) + H(+)(in) = L-threonine(out) + H(+)(out). It carries out the reaction L-serine(in) + H(+)(in) = L-serine(out) + H(+)(out). Involved in the import of threonine and serine into the cell, with the concomitant import of a proton (symport system). The sequence is that of Threonine/serine transporter TdcC from Salmonella paratyphi B (strain ATCC BAA-1250 / SPB7).